The chain runs to 694 residues: MSEASCLASPLLYTNSGIHSDSFYASLIDSATHKAQLKQIHARLLVLGLQFSGFLITKLIHASSSFGDITFARQVFDDLPRPQIFPWNAIIRGYSRNNHFQDALLMYSNMQLARVSPDSFTFPHLLKACSGLSHLQMGRFVHAQVFRLGFDADVFVQNGLIALYAKCRRLGSARTVFEGLPLPERTIVSWTAIVSAYAQNGEPMEALEIFSQMRKMDVKPDWVALVSVLNAFTCLQDLKQGRSIHASVVKMGLEIEPDLLISLNTMYAKCGQVATAKILFDKMKSPNLILWNAMISGYAKNGYAREAIDMFHEMINKDVRPDTISITSAISACAQVGSLEQARSMYEYVGRSDYRDDVFISSALIDMFAKCGSVEGARLVFDRTLDRDVVVWSAMIVGYGLHGRAREAISLYRAMERGGVHPNDVTFLGLLMACNHSGMVREGWWFFNRMADHKINPQQQHYACVIDLLGRAGHLDQAYEVIKCMPVQPGVTVWGALLSACKKHRHVELGEYAAQQLFSIDPSNTGHYVQLSNLYAAARLWDRVAEVRVRMKEKGLNKDVGCSWVEVRGRLEAFRVGDKSHPRYEEIERQVEWIESRLKEGGFVANKDASLHDLNDEEAEETLCSHSERIAIAYGLISTPQGTPLRITKNLRACVNCHAATKLISKLVDREIVVRDTNRFHHFKDGVCSCGDYW.

13 PPR repeats span residues S52–P82, Q83–P117, D118–A152, D153–P183, T186–P220, D221–I255, E256–P286, N287–P321, D322–D356, D357–R387, D388–P422, N423–P457, and Q458–Q488. Positions V493–R568 are type E motif. Residues G569–K599 form a type E(+) motif region. The interval E600–W694 is type DYW motif.

This sequence belongs to the PPR family. PCMP-H subfamily.

This Arabidopsis thaliana (Mouse-ear cress) protein is Pentatricopeptide repeat-containing protein At3g12770 (PCMP-H43).